The chain runs to 135 residues: Small ribosomal subunit protein bS6 (135 aa).

A compositionally biased stretch (polar residues) spans 99–120; that stretch reads QHSSLGRSTAPANPMASNTPRT. Residues 99–135 are disordered; that stretch reads QHSSLGRSTAPANPMASNTPRTEGQEQAKTEPQTAPA.

Belongs to the bacterial ribosomal protein bS6 family.

Binds together with bS18 to 16S ribosomal RNA. This chain is Small ribosomal subunit protein bS6, found in Synechococcus sp. (strain RCC307).